The sequence spans 63 residues: Large ribosomal subunit protein uL29 (63 aa).

Belongs to the universal ribosomal protein uL29 family.

The sequence is that of Large ribosomal subunit protein uL29 from Glaesserella parasuis serovar 5 (strain SH0165) (Haemophilus parasuis).